A 581-amino-acid polypeptide reads, in one-letter code: Laccase-1 (581 aa).

The first 25 residues, 1 to 25 (MENLGFLIISTFLLLFTTLLPYSSA), serve as a signal peptide directing secretion. Plastocyanin-like domains lie at 34–150 (NVEW…PRQP) and 161–312 (EIPI…YTGK). Residue Asn-80 is glycosylated (N-linked (GlcNAc...) asparagine). Cu cation-binding residues include His-84, His-86, His-129, and His-131. Residues Asn-241, Asn-300, Asn-386, and Asn-403 are each glycosylated (N-linked (GlcNAc...) asparagine). Residues 429–565 (DFPEKPPNRF…AMGFIVKDGP (137 aa)) enclose the Plastocyanin-like 3 domain. Cu cation-binding residues include His-482, His-485, His-487, His-544, Cys-545, His-546, and His-550.

This sequence belongs to the multicopper oxidase family. It depends on Cu cation as a cofactor. Expressed in roots, stems and flowers.

The protein localises to the secreted. It localises to the extracellular space. It is found in the apoplast. The catalysed reaction is 4 hydroquinone + O2 = 4 benzosemiquinone + 2 H2O. In terms of biological role, lignin degradation and detoxification of lignin-derived products. This Arabidopsis thaliana (Mouse-ear cress) protein is Laccase-1 (LAC1).